A 972-amino-acid polypeptide reads, in one-letter code: Optomotor-blind protein (972 aa).

Disordered stretches follow at residues 44–248, 263–286, 508–563, 645–676, 805–889, and 918–972; these read SLLT…YFPA, PGLY…HAHH, AKGF…HPHA, ADVE…TGSP, AVTP…PSEL, and EEAA…GTDQ. Low complexity-rich tracts occupy residues 49–80 and 97–142; these read GSNN…NTNN and SNHS…NNTS. Residues 155-176 are compositionally biased toward pro residues; sequence PPSPAGTPPPTIVGLPPIPPPN. Composition is skewed to low complexity over residues 177-193 and 201-212; these read NNSS…AAAH and AHHSPSTGAAAP. The span at 213–225 shows a compositional bias: pro residues; sequence PAGPTGLPPPTPP. Residues 226-237 are compositionally biased toward low complexity; it reads HHLQQQQQQQQH. Over residues 274 to 286 the composition is skewed to basic residues; sequence PPHHPGAHPHAHH. Positions 332–513 form a DNA-binding region, T-box; sequence LEGKDLWEKF…NNPFAKGFRD (182 aa). Gly residues predominate over residues 818 to 831; that stretch reads PPGGGGGGLGGGVV. A compositionally biased stretch (low complexity) spans 835-851; sequence PRSLSSSPRPRPASHSP. A Phosphoserine modification is found at Ser887. Positions 952 to 963 are enriched in basic residues; sequence HPHHQTHLHSHH.

In third-instar larvae, expressed in the brain region that will develop into optic lobes and more weakly in the thoracic part of the ventral ganglion.

It localises to the nucleus. Essential protein that may function as a transcription regulator. Vital for pupal development. Required for proper development of the optic lobes and wings, and abdominal pigmentation. This Drosophila melanogaster (Fruit fly) protein is Optomotor-blind protein (bi).